Here is a 938-residue protein sequence, read N- to C-terminus: Protein translocase subunit SecA 1 (938 aa).

Residues Gln84, 102–106, and Asp491 each bind ATP; that span reads GEGKT. The tract at residues 865–938 is disordered; sequence QTGGVATKER…QKTGRHAKRR (74 aa). Residues 918-927 are compositionally biased toward basic and acidic residues; that stretch reads TRKERREAAR.

It belongs to the SecA family. In terms of assembly, monomer and homodimer. Part of the essential Sec protein translocation apparatus which comprises SecA, SecYEG and auxiliary proteins SecDF. Other proteins may also be involved.

It is found in the cell membrane. The protein resides in the cytoplasm. The catalysed reaction is ATP + H2O + cellular proteinSide 1 = ADP + phosphate + cellular proteinSide 2.. Part of the Sec protein translocase complex. Interacts with the SecYEG preprotein conducting channel. Has a central role in coupling the hydrolysis of ATP to the transfer of proteins into and across the cell membrane, serving as an ATP-driven molecular motor driving the stepwise translocation of polypeptide chains across the membrane. This Mycolicibacterium vanbaalenii (strain DSM 7251 / JCM 13017 / BCRC 16820 / KCTC 9966 / NRRL B-24157 / PYR-1) (Mycobacterium vanbaalenii) protein is Protein translocase subunit SecA 1.